The primary structure comprises 452 residues: Retinoid-inducible serine carboxypeptidase (452 aa).

The N-terminal stretch at 1 to 28 (MELSRRICLVRLWLLLLSFLLGFSAGSA) is a signal peptide. N-linked (GlcNAc...) asparagine glycans are attached at residues N64, N102, and N126. The active site involves S167. 2 N-linked (GlcNAc...) asparagine glycosylation sites follow: N192 and N362. Catalysis depends on residues D371 and H431.

This sequence belongs to the peptidase S10 family. As to expression, highly expressed in aorta, bladder, and kidney with much lower levels in all other tissues analyzed. Expression in kidney is restricted to proximal convoluted tubules.

It localises to the secreted. May be involved in vascular wall and kidney homeostasis. This is Retinoid-inducible serine carboxypeptidase (Scpep1) from Rattus norvegicus (Rat).